A 280-amino-acid polypeptide reads, in one-letter code: 4-diphosphocytidyl-2-C-methyl-D-erythritol kinase (280 aa).

The active site involves Lys-8. Position 91–101 (91–101) interacts with ATP; that stretch reads PIEAGLAGGSS. Asp-133 is an active-site residue.

The protein belongs to the GHMP kinase family. IspE subfamily.

It carries out the reaction 4-CDP-2-C-methyl-D-erythritol + ATP = 4-CDP-2-C-methyl-D-erythritol 2-phosphate + ADP + H(+). The protein operates within isoprenoid biosynthesis; isopentenyl diphosphate biosynthesis via DXP pathway; isopentenyl diphosphate from 1-deoxy-D-xylulose 5-phosphate: step 3/6. In terms of biological role, catalyzes the phosphorylation of the position 2 hydroxy group of 4-diphosphocytidyl-2C-methyl-D-erythritol. This is 4-diphosphocytidyl-2-C-methyl-D-erythritol kinase from Clostridium tetani (strain Massachusetts / E88).